The primary structure comprises 572 residues: Hemagglutinin-neuraminidase (572 aa).

At 1–31 the chain is on the intravirion side; sequence MEYWKHTNHGKDACNELGTSMATHGNKITNK. The helical transmembrane segment at 32–52 threads the bilayer; that stretch reads ITYILWTIILVLLSIIFIIVL. Topologically, residues 53–572 are virion surface; it reads INSIKSEKAH…FKTEIPKSCS (520 aa). 2 disulfide bridges follow: C190–C214 and C256–C269. An involved in neuraminidase activity region spans residues 252–257; that stretch reads NRKSCS. N-linked (GlcNAc...) asparagine; by host glycans are attached at residues N308 and N351. 2 disulfides stabilise this stretch: C355–C469 and C463–C473. An N-linked (GlcNAc...) asparagine; by host glycan is attached at N523. C535 and C544 are oxidised to a cystine.

This sequence belongs to the paramyxoviruses hemagglutinin-neuraminidase family. As to quaternary structure, homotetramer; composed of disulfide-linked homodimers. Interacts with F protein trimer.

It localises to the virion membrane. Its subcellular location is the host cell membrane. The enzyme catalyses Hydrolysis of alpha-(2-&gt;3)-, alpha-(2-&gt;6)-, alpha-(2-&gt;8)- glycosidic linkages of terminal sialic acid residues in oligosaccharides, glycoproteins, glycolipids, colominic acid and synthetic substrates.. In terms of biological role, attaches the virus to sialic acid-containing cell receptors and thereby initiating infection. Binding of HN protein to the receptor induces a conformational change that allows the F protein to trigger virion/cell membranes fusion. Its function is as follows. Neuraminidase activity ensures the efficient spread of the virus by dissociating the mature virions from the neuraminic acid containing glycoproteins. This is Hemagglutinin-neuraminidase (HN) from Homo sapiens (Human).